The chain runs to 169 residues: MGDAIRIIGIDPGLRRTGWGIVESLGNSLRFVASGTVRSEDKAALATRLCQLHDGLAEVLHAAMPHEAAVEQTFVNKDAVATLKLGQARGIAMLVPARAGLVVAEYAPNAVKKAVIGVGHGDKKQIHMMVKVLLPKATFDTEHAADALAIAICHAHHRQSAAYRMALAG.

Active-site residues include aspartate 11, glutamate 71, and histidine 143. 3 residues coordinate Mg(2+): aspartate 11, glutamate 71, and histidine 143.

It belongs to the RuvC family. Homodimer which binds Holliday junction (HJ) DNA. The HJ becomes 2-fold symmetrical on binding to RuvC with unstacked arms; it has a different conformation from HJ DNA in complex with RuvA. In the full resolvosome a probable DNA-RuvA(4)-RuvB(12)-RuvC(2) complex forms which resolves the HJ. Mg(2+) is required as a cofactor.

It localises to the cytoplasm. It catalyses the reaction Endonucleolytic cleavage at a junction such as a reciprocal single-stranded crossover between two homologous DNA duplexes (Holliday junction).. The RuvA-RuvB-RuvC complex processes Holliday junction (HJ) DNA during genetic recombination and DNA repair. Endonuclease that resolves HJ intermediates. Cleaves cruciform DNA by making single-stranded nicks across the HJ at symmetrical positions within the homologous arms, yielding a 5'-phosphate and a 3'-hydroxyl group; requires a central core of homology in the junction. The consensus cleavage sequence is 5'-(A/T)TT(C/G)-3'. Cleavage occurs on the 3'-side of the TT dinucleotide at the point of strand exchange. HJ branch migration catalyzed by RuvA-RuvB allows RuvC to scan DNA until it finds its consensus sequence, where it cleaves and resolves the cruciform DNA. This is Crossover junction endodeoxyribonuclease RuvC from Mesorhizobium japonicum (strain LMG 29417 / CECT 9101 / MAFF 303099) (Mesorhizobium loti (strain MAFF 303099)).